A 70-amino-acid chain; its full sequence is Probable non-specific lipid-transfer protein 2 (70 aa).

Intrachain disulfides connect C4/C38, C12/C26, C27/C62, and C36/C69.

In terms of biological role, potential phospholipid transfer protein. This Zea mays (Maize) protein is Probable non-specific lipid-transfer protein 2.